Here is a 244-residue protein sequence, read N- to C-terminus: Ribonuclease PH (244 aa).

Residues Arg90 and Gly128 to Arg130 contribute to the phosphate site.

Belongs to the RNase PH family. In terms of assembly, homohexameric ring arranged as a trimer of dimers.

It carries out the reaction tRNA(n+1) + phosphate = tRNA(n) + a ribonucleoside 5'-diphosphate. In terms of biological role, phosphorolytic 3'-5' exoribonuclease that plays an important role in tRNA 3'-end maturation. Removes nucleotide residues following the 3'-CCA terminus of tRNAs; can also add nucleotides to the ends of RNA molecules by using nucleoside diphosphates as substrates, but this may not be physiologically important. Probably plays a role in initiation of 16S rRNA degradation (leading to ribosome degradation) during starvation. This is Ribonuclease PH from Prochlorococcus marinus (strain MIT 9313).